A 279-amino-acid polypeptide reads, in one-letter code: Phosphonates import ATP-binding protein PhnC 2 (279 aa).

An ABC transporter domain is found at 10–253 (LSLKGVSVRY…VARNLYAKQS (244 aa)). Residue 43 to 50 (GASGAGKS) coordinates ATP. A compositionally biased stretch (low complexity) spans 253–262 (SNASNTSAST). The tract at residues 253 to 279 (SNASNTSASTDSPRTLQSSQTKELLPC) is disordered. The span at 263–279 (DSPRTLQSSQTKELLPC) shows a compositional bias: polar residues.

This sequence belongs to the ABC transporter superfamily. Phosphonates importer (TC 3.A.1.9.1) family. The complex is composed of two ATP-binding proteins (PhnC), two transmembrane proteins (PhnE) and a solute-binding protein (PhnD).

Its subcellular location is the cell inner membrane. The enzyme catalyses phosphonate(out) + ATP + H2O = phosphonate(in) + ADP + phosphate + H(+). Part of the ABC transporter complex PhnCDE involved in phosphonates import. Responsible for energy coupling to the transport system. This chain is Phosphonates import ATP-binding protein PhnC 2, found in Cupriavidus metallidurans (strain ATCC 43123 / DSM 2839 / NBRC 102507 / CH34) (Ralstonia metallidurans).